We begin with the raw amino-acid sequence, 806 residues long: 85/88 kDa calcium-independent phospholipase A2 (806 aa).

9 ANK repeats span residues 120–147, 151–181, 185–215, 219–248, 251–281, 286–312, 316–345, 349–378, and 382–403; these read WSVA…ANCA, EGCT…QMDV, KGET…GLNQ, QGLT…RCNI, PNGY…QIHS, YGAS…NVNS, AGNT…NADA, HGNT…EVDT, and FGET…KAIL. Transmembrane regions (helical) follow at residues 480–500 and 511–531; these read LLCL…LIAI and LFDW…ILHS. In terms of domain architecture, PNPLA spans 481-665; it reads LCLDGGGVKG…LANNPTLDAM (185 aa). The GXGXXG signature appears at 485 to 490; that stretch reads GGGVKG. The short motif at 517–521 is the GXSXG element; it reads GTSTG. Serine 519 functions as the Nucleophile in the catalytic mechanism. Residue aspartate 652 is the Proton acceptor of the active site. A DGA/G motif is present at residues 652 to 654; the sequence is DGG. The interval 677–686 is calmodulin-binding (1-9-14 motif); that stretch reads RKGQANKVKK. Positions 748-759 are calmodulin-binding (IQ motif); sequence AWCEMVGIQYFR.

Homodimer formed by catalytic domains tightly interacting through a large hydrophobic interface. The contact area involves 3 alpha helices, several loops and a part of the beta sheet from each monomer. Both active sites of the dimer are in close proximity adopting an open conformation that provide sufficient space for phospholipid access and favoring cooperativity in deacylation-reacylation reactions. Each monomer has 9 ankyrin repeats stacked side-by-side in an elongated structure oriented outwards from the catalytic core. As to expression, four different transcripts were found to be expressed in a distinct tissue distribution.

It is found in the cytoplasm. The protein localises to the cell membrane. The protein resides in the mitochondrion. It localises to the cell projection. Its subcellular location is the pseudopodium. It carries out the reaction a 1,2-diacyl-sn-glycero-3-phosphocholine + H2O = a 1-acyl-sn-glycero-3-phosphocholine + a fatty acid + H(+). The enzyme catalyses a 1-O-alkyl-2-acyl-sn-glycero-3-phosphocholine + H2O = a 1-O-alkyl-sn-glycero-3-phosphocholine + a fatty acid + H(+). The catalysed reaction is 1,2-dihexadecanoyl-sn-glycero-3-phosphocholine + H2O = 1-hexadecanoyl-sn-glycero-3-phosphocholine + hexadecanoate + H(+). It catalyses the reaction 1-hexadecanoyl-2-(9Z-octadecenoyl)-sn-glycero-3-phosphocholine + H2O = 1-hexadecanoyl-sn-glycero-3-phosphocholine + (9Z)-octadecenoate + H(+). It carries out the reaction 1-hexadecanoyl-2-(9Z,12Z-octadecadienoyl)-sn-glycero-3-phosphocholine + H2O = (9Z,12Z)-octadecadienoate + 1-hexadecanoyl-sn-glycero-3-phosphocholine + H(+). The enzyme catalyses 1-hexadecanoyl-2-(5Z,8Z,11Z,14Z-eicosatetraenoyl)-sn-glycero-3-phosphocholine + H2O = 1-hexadecanoyl-sn-glycero-3-phosphocholine + (5Z,8Z,11Z,14Z)-eicosatetraenoate + H(+). The catalysed reaction is 1-octadecanoyl-2-(5Z,8Z,11Z,14Z-eicosatetraenoyl)-sn-glycero-3-phosphocholine + H2O = 1-octadecanoyl-sn-glycero-3-phosphocholine + (5Z,8Z,11Z,14Z)-eicosatetraenoate + H(+). It catalyses the reaction 1-hexadecanoyl-2-(5Z,8Z,11Z,14Z-eicosatetraenoyl)-sn-glycero-3-phosphoethanolamine + H2O = 1-hexadecanoyl-sn-glycero-3-phosphoethanolamine + (5Z,8Z,11Z,14Z)-eicosatetraenoate + H(+). It carries out the reaction 1,2-dihexadecanoyl-sn-glycero-3-phosphate + H2O = 1-hexadecanoyl-sn-glycero-3-phosphate + hexadecanoate + H(+). The enzyme catalyses a 1-acyl-sn-glycero-3-phosphocholine + H2O = sn-glycerol 3-phosphocholine + a fatty acid + H(+). The catalysed reaction is 1-hexadecanoyl-sn-glycero-3-phosphocholine + H2O = sn-glycerol 3-phosphocholine + hexadecanoate + H(+). It catalyses the reaction 1-(5Z,8Z,11Z,14Z-eicosatetraenoyl)-sn-glycero-3-phosphocholine + H2O = sn-glycerol 3-phosphocholine + (5Z,8Z,11Z,14Z)-eicosatetraenoate + H(+). It carries out the reaction 2-(5Z,8Z,11Z,14Z)-eicosatetraenoyl-sn-glycero-3-phosphocholine + H2O = sn-glycerol 3-phosphocholine + (5Z,8Z,11Z,14Z)-eicosatetraenoate + H(+). The enzyme catalyses 1-O-hexadecyl-2-(5Z,8Z,11Z,14Z)-eicosatetraenoyl-sn-glycero-3-phosphocholine + H2O = 1-O-hexadecyl-sn-glycero-3-phosphocholine + (5Z,8Z,11Z,14Z)-eicosatetraenoate + H(+). The catalysed reaction is 1-O-hexadecyl-2-acetyl-sn-glycero-3-phosphocholine + H2O = 1-O-hexadecyl-sn-glycero-3-phosphocholine + acetate + H(+). It catalyses the reaction hexadecanoyl-CoA + H2O = hexadecanoate + CoA + H(+). It carries out the reaction 1',3'-bis[1,2-di-(9Z-octadecenoyl)-sn-glycero-3-phospho]-glycerol + H2O = 1'-[1,2-di-(9Z-octadecenoyl)-sn-glycero-3-phospho]-3'-[1-(9Z-octadecenoyl)-sn-glycero-3-phospho]-glycerol + (9Z)-octadecenoate + H(+). The enzyme catalyses 1'-[1,2-di-(9Z-octadecenoyl)-sn-glycero-3-phospho]-3'-[1-(9Z-octadecenoyl)-sn-glycero-3-phospho]-glycerol + H2O = 1',3'-bis-[1-(9Z-octadecenoyl)-sn-glycero-3-phospho]-glycerol + (9Z)-octadecenoate + H(+). The catalysed reaction is 1',3'-bis-[1,2-di-(9Z,12Z-octadecadienoyl)-sn-glycero-3-phospho]-glycerol + H2O = 1'-[1,2-di-(9Z,12Z-octadecadienoyl)-sn-glycero-3-phospho]-3'-[1-(9Z,12Z-octadecadienoyl)-sn-glycero-3-phospho]-glycerol + (9Z,12Z)-octadecadienoate + H(+). It catalyses the reaction 1-octadecanoyl-2-(15-hydroxy-(5Z,8Z,11Z,13E)-eicosatetraenoyl)-sn-glycero-3-phosphoethanolamine + H2O = 1-octadecanoyl-sn-glycero-3-phosphoethanolamine + 15-hydroxy-(5Z,8Z,11Z,13E)-eicosatetraenoate + H(+). Its activity is regulated as follows. Activated by ATP. Inhibited by calcium-activated calmodulin. Inhibited by bromoenol lactone (BEL). In terms of biological role, calcium-independent phospholipase involved in phospholipid remodeling with implications in cellular membrane homeostasis, mitochondrial integrity and signal transduction. Hydrolyzes the ester bond of the fatty acyl group attached at sn-1 or sn-2 position of phospholipids (phospholipase A1 and A2 activity respectively), producing lysophospholipids that are used in deacylation-reacylation cycles. Hydrolyzes both saturated and unsaturated long fatty acyl chains in various glycerophospholipid classes such as phosphatidylcholines, phosphatidylethanolamines and phosphatidates, with a preference for hydrolysis at sn-2 position. Can further hydrolyze lysophospholipids carrying saturated fatty acyl chains (lysophospholipase activity). Upon oxidative stress, contributes to remodeling of mitochondrial phospholipids in pancreatic beta cells, in a repair mechanism to reduce oxidized lipid content. Preferentially hydrolyzes oxidized polyunsaturated fatty acyl chains from cardiolipins, yielding monolysocardiolipins that can be reacylated with unoxidized fatty acyls to regenerate native cardiolipin species. Hydrolyzes oxidized glycerophosphoethanolamines present in pancreatic islets, releasing oxidized polyunsaturated fatty acids such as hydroxyeicosatetraenoates (HETEs). Has thioesterase activity toward fatty-acyl CoA releasing CoA-SH known to facilitate fatty acid transport and beta-oxidation in mitochondria particularly in skeletal muscle. Plays a role in regulation of membrane dynamics and homeostasis. Selectively hydrolyzes sn-2 arachidonoyl group in plasmalogen phospholipids, structural components of lipid rafts and myelin. Regulates F-actin polymerization at the pseudopods, which is required for both speed and directionality of MCP1/CCL2-induced monocyte chemotaxis. Targets membrane phospholipids to produce potent lipid signaling messengers. Generates lysophosphatidate (LPA, 1-acyl-glycerol-3-phosphate), which acts via G-protein receptors in various cell types. Has phospholipase A2 activity toward platelet-activating factor (PAF, 1-O-alkyl-2-acetyl-sn-glycero-3-phosphocholine), likely playing a role in inactivation of this potent pro-inflammatory signaling lipid. In response to glucose, amplifies calcium influx in pancreatic beta cells to promote INS secretion. Lacks the catalytic domain and may act as a negative regulator of the catalytically active isoforms. In Homo sapiens (Human), this protein is 85/88 kDa calcium-independent phospholipase A2 (PLA2G6).